The chain runs to 823 residues: Trimethylamine-N-oxide reductase (823 aa).

Residues 1–32 constitute a signal peptide (tat-type signal); sequence MKQSRRQFLKNMSAMAATFAMPNFLIAQNAFA. Mo-bis(molybdopterin guanine dinucleotide) is bound at residue Ser-181.

Belongs to the prokaryotic molybdopterin-containing oxidoreductase family. It depends on Mo-bis(molybdopterin guanine dinucleotide) as a cofactor. Predicted to be exported by the Tat system. The position of the signal peptide cleavage has not been experimentally proven.

The protein resides in the periplasm. The enzyme catalyses trimethylamine + 2 Fe(III)-[cytochrome c] + H2O = trimethylamine N-oxide + 2 Fe(II)-[cytochrome c] + 3 H(+). In terms of biological role, reduces trimethylamine-N-oxide (TMAO) into trimethylamine; an anaerobic reaction coupled to energy-yielding reactions. This is Trimethylamine-N-oxide reductase (torA) from Pasteurella multocida (strain Pm70).